A 328-amino-acid chain; its full sequence is Alanine racemase (328 aa).

The active-site Proton acceptor; specific for D-alanine is Lys33. Position 33 is an N6-(pyridoxal phosphate)lysine (Lys33). Substrate is bound at residue Arg118. The Proton acceptor; specific for L-alanine role is filled by Tyr237. Position 283 (Met283) interacts with substrate.

The protein belongs to the alanine racemase family. It depends on pyridoxal 5'-phosphate as a cofactor.

It carries out the reaction L-alanine = D-alanine. Its pathway is amino-acid biosynthesis; D-alanine biosynthesis; D-alanine from L-alanine: step 1/1. Its function is as follows. Catalyzes the interconversion of L-alanine and D-alanine. May also act on other amino acids. In Campylobacter jejuni subsp. jejuni serotype O:6 (strain 81116 / NCTC 11828), this protein is Alanine racemase (alr).